We begin with the raw amino-acid sequence, 246 residues long: tRNA (guanine-N(1)-)-methyltransferase (246 aa).

S-adenosyl-L-methionine is bound by residues G113 and 132–137 (LGDYVL).

It belongs to the RNA methyltransferase TrmD family. In terms of assembly, homodimer.

It localises to the cytoplasm. It carries out the reaction guanosine(37) in tRNA + S-adenosyl-L-methionine = N(1)-methylguanosine(37) in tRNA + S-adenosyl-L-homocysteine + H(+). Functionally, specifically methylates guanosine-37 in various tRNAs. The protein is tRNA (guanine-N(1)-)-methyltransferase of Lactiplantibacillus plantarum (strain ATCC BAA-793 / NCIMB 8826 / WCFS1) (Lactobacillus plantarum).